Consider the following 650-residue polypeptide: Chaperone protein DnaK (650 aa).

The residue at position 200 (T200) is a Phosphothreonine; by autocatalysis.

Belongs to the heat shock protein 70 family.

Acts as a chaperone. The sequence is that of Chaperone protein DnaK from Paraburkholderia phytofirmans (strain DSM 17436 / LMG 22146 / PsJN) (Burkholderia phytofirmans).